A 346-amino-acid polypeptide reads, in one-letter code: KH domain-containing, RNA-binding, signal transduction-associated protein 2 (346 aa).

In terms of domain architecture, KH spans 65–131 (LIPVQQYPKF…AKYAHLSNDL (67 aa)). The tract at residues 175–291 (LSYLNGSDDP…SYESYDDNYS (117 aa)) is disordered. Residues 195-224 (LRLTSTASPRGRGSAAPPAPPGRGAAAPRG) show a composition bias toward low complexity. Positions 268 to 287 (YGYDDGYDGEYDDQSYESYD) are enriched in acidic residues.

It belongs to the KHDRBS family.

The protein localises to the nucleus. RNA-binding protein that plays a role in the regulation of alternative splicing. This is KH domain-containing, RNA-binding, signal transduction-associated protein 2 (khdrbs2) from Danio rerio (Zebrafish).